The sequence spans 499 residues: Guanosine-5'-triphosphate,3'-diphosphate pyrophosphatase (499 aa).

The protein belongs to the GppA/Ppx family. GppA subfamily.

The enzyme catalyses guanosine 3'-diphosphate 5'-triphosphate + H2O = guanosine 3',5'-bis(diphosphate) + phosphate + H(+). Its pathway is purine metabolism; ppGpp biosynthesis; ppGpp from GTP: step 2/2. In terms of biological role, catalyzes the conversion of pppGpp to ppGpp. Guanosine pentaphosphate (pppGpp) is a cytoplasmic signaling molecule which together with ppGpp controls the 'stringent response', an adaptive process that allows bacteria to respond to amino acid starvation, resulting in the coordinated regulation of numerous cellular activities. This chain is Guanosine-5'-triphosphate,3'-diphosphate pyrophosphatase, found in Sodalis glossinidius (strain morsitans).